Reading from the N-terminus, the 276-residue chain is Glutathione S-transferase-like protein ustS (276 aa).

Residues 16 to 109 (STLPGTSKSW…HLDETYPDPP (94 aa)) form the GST N-terminal domain.

This sequence belongs to the GST superfamily.

It participates in mycotoxin biosynthesis. Functionally, glutathione S-transferase-like protein; part of the gene cluster that mediates the biosynthesis of the secondary metabolite ustiloxin B, an antimitotic tetrapeptide. First, ustA is processed by the subtilisin-like endoprotease Kex2 that is outside the ustiloxin B gene cluster, at the C-terminal side of Arg-Lys, after transfer to Golgi apparatus through the endoplasmic reticulum (ER). Cleavage by KEX2 generates 16 peptides YAIG-I to YAIG-XVI. To process the precursor peptide further, at least two peptidases are necessary to cleave the N-terminal and C-terminal sides of the Tyr-Ala-Ile-Gly core peptide which serves as backbone for the synthesis of ustiloxin B, through cyclization and modification of the tyrosine with a non-protein coding amino acid, norvaline. One of the two peptidases must be the serine peptidase ustP; and the other pepdidase is probably ustH. Macrocyclization of the core peptide derived from ustA requires the tyrosinase ustQ, as well as the homologous oxidases ustYa and ustYb, and leads to the production of the first cyclization product N-desmethylustiloxin F. For the formation of N-desmethylustiloxin F, three oxidation steps are required, hydroxylation at the benzylic position, hydroxylation at either the aromatic ring of Tyr or beta-position of Ile, and oxidative cyclization. UstQ may catalyze the oxidation of a phenol moiety, whereas the ustYa and ustYb are most likely responsible for the remaining two-step oxidations. N-desmethylustiloxin F is then methylated by ustM to yield ustiloxin F which in turn substrate of the cytochrome P450 monooxygenase ustC which catalyzes the formation of S-deoxyustiloxin H. The flavoprotein monooxygenases ustF1 and ustF2 then participate in the modification of the side chain of S-deoxyustiloxin H, leading to the synthesis of an oxime intermediate, via ustiloxin H. Finally, carboxylative dehydration performed by the cysteine desulfurase-like protein ustD yields ustiloxin B. The polypeptide is Glutathione S-transferase-like protein ustS (Aspergillus flavus (strain ATCC 200026 / FGSC A1120 / IAM 13836 / NRRL 3357 / JCM 12722 / SRRC 167)).